An 865-amino-acid chain; its full sequence is Protein translocase subunit SecA (865 aa).

ATP contacts are provided by residues Q93, G111–T115, and D501. Positions 841, 843, 852, and 853 each coordinate Zn(2+).

Belongs to the SecA family. In terms of assembly, monomer and homodimer. Part of the essential Sec protein translocation apparatus which comprises SecA, SecYEG and auxiliary proteins SecDF-YajC and YidC. Zn(2+) serves as cofactor.

It is found in the cell inner membrane. It localises to the cytoplasm. It catalyses the reaction ATP + H2O + cellular proteinSide 1 = ADP + phosphate + cellular proteinSide 2.. Functionally, part of the Sec protein translocase complex. Interacts with the SecYEG preprotein conducting channel. Has a central role in coupling the hydrolysis of ATP to the transfer of proteins into and across the cell membrane, serving as an ATP-driven molecular motor driving the stepwise translocation of polypeptide chains across the membrane. This Helicobacter pylori (strain Shi470) protein is Protein translocase subunit SecA.